Here is a 343-residue protein sequence, read N- to C-terminus: MAAVVPVTVELGFVEEAPAWRLRSEQFPSKVGGRPAWLALAELPGPGALACARCGRPLAFLLQVYAPLPGRDEAFHRSLFLFCCREPLCCAGLRVFRNQLPRKNAFYSYEPPSETGASDTECVCLQLKSGAHLCRVCGCLAPMTCSRCKQAHYCSKEHQTLDWQLGHKQACTQSDHLDHMVPDHNFLFPEFEIVTETEDEIGPEVVEMEDYSEVIGSMEGVPEEELDSMAKHESKEDHIFQKFKSKIALEPEQILRYGRGIKPIWISGENIPQEKDIPDCSCGAKRIFEFQVMPQLLNHLKADRLGTSVDWGILAVFTCAESCSLGIGYTEEFVWKQDVTETP.

Positions 134, 137, 145, 148, 154, 158, 167, and 171 each coordinate Zn(2+). The MYND-type; atypical zinc-finger motif lies at 134-171; sequence CRVCGCLAPMTCSRCKQAHYCSKEHQTLDWQLGHKQAC.

Post-translationally, ubiquitinated by PRKN, promoting proteasomal degradation.

Its subcellular location is the nucleus. In terms of biological role, may be a DNA-binding protein with a regulatory function. May play an important role in cell death and/or in regulation of cell proliferation. The protein is Programmed cell death protein 2 (Pdcd2) of Rattus norvegicus (Rat).